The chain runs to 279 residues: tRNA-cytidine(32) 2-sulfurtransferase (279 aa).

The short motif at Ser-46–Ser-51 is the PP-loop motif element. [4Fe-4S] cluster is bound by residues Cys-121, Cys-124, and Cys-212.

This sequence belongs to the TtcA family. In terms of assembly, homodimer. It depends on Mg(2+) as a cofactor. Requires [4Fe-4S] cluster as cofactor.

It localises to the cytoplasm. It carries out the reaction cytidine(32) in tRNA + S-sulfanyl-L-cysteinyl-[cysteine desulfurase] + AH2 + ATP = 2-thiocytidine(32) in tRNA + L-cysteinyl-[cysteine desulfurase] + A + AMP + diphosphate + H(+). Its pathway is tRNA modification. Functionally, catalyzes the ATP-dependent 2-thiolation of cytidine in position 32 of tRNA, to form 2-thiocytidine (s(2)C32). The sulfur atoms are provided by the cysteine/cysteine desulfurase (IscS) system. In Marinomonas sp. (strain MWYL1), this protein is tRNA-cytidine(32) 2-sulfurtransferase.